Consider the following 201-residue polypeptide: MNSVRTADVKRTTKETEVEVSVNLDGSGRAKVDTGLPFFDHLLHQFAFHGRIDVEIKARGDLEVDDHHTVEDVGICLGKALNEALGDREGIRRIAWALVPMDEALVECAVDISGRPYFVLKGYRPRRNRIGSPPLSTENVSHFWKSFCDHAGVTMHVVVRWWDNDHHAIEAMFKAVGRALGAAKEIVGDGVPSTKGTLRRG.

This sequence belongs to the imidazoleglycerol-phosphate dehydratase family.

It localises to the cytoplasm. The enzyme catalyses D-erythro-1-(imidazol-4-yl)glycerol 3-phosphate = 3-(imidazol-4-yl)-2-oxopropyl phosphate + H2O. The protein operates within amino-acid biosynthesis; L-histidine biosynthesis; L-histidine from 5-phospho-alpha-D-ribose 1-diphosphate: step 6/9. The chain is Imidazoleglycerol-phosphate dehydratase from Methanopyrus kandleri (strain AV19 / DSM 6324 / JCM 9639 / NBRC 100938).